Consider the following 542-residue polypeptide: Chaperonin GroEL 2 (542 aa).

ATP contacts are provided by residues 30–33 (TLGP), K51, 87–91 (DGTTT), G415, and D496.

This sequence belongs to the chaperonin (HSP60) family. As to quaternary structure, forms a cylinder of 14 subunits composed of two heptameric rings stacked back-to-back. Interacts with the co-chaperonin GroES.

It localises to the cytoplasm. The enzyme catalyses ATP + H2O + a folded polypeptide = ADP + phosphate + an unfolded polypeptide.. In terms of biological role, together with its co-chaperonin GroES, plays an essential role in assisting protein folding. The GroEL-GroES system forms a nano-cage that allows encapsulation of the non-native substrate proteins and provides a physical environment optimized to promote and accelerate protein folding. The protein is Chaperonin GroEL 2 of Azorhizobium caulinodans (strain ATCC 43989 / DSM 5975 / JCM 20966 / LMG 6465 / NBRC 14845 / NCIMB 13405 / ORS 571).